The chain runs to 255 residues: 4-hydroxy-tetrahydrodipicolinate reductase (255 aa).

NAD(+) contacts are provided by residues 9–14, 89–91, and 115–118; these read GFKGKM, GTT, and APNF. Histidine 145 serves as the catalytic Proton donor/acceptor. Histidine 146 lines the (S)-2,3,4,5-tetrahydrodipicolinate pocket. Residue lysine 149 is the Proton donor of the active site. 155-156 serves as a coordination point for (S)-2,3,4,5-tetrahydrodipicolinate; that stretch reads GT.

The protein belongs to the DapB family.

Its subcellular location is the cytoplasm. The enzyme catalyses (S)-2,3,4,5-tetrahydrodipicolinate + NAD(+) + H2O = (2S,4S)-4-hydroxy-2,3,4,5-tetrahydrodipicolinate + NADH + H(+). It catalyses the reaction (S)-2,3,4,5-tetrahydrodipicolinate + NADP(+) + H2O = (2S,4S)-4-hydroxy-2,3,4,5-tetrahydrodipicolinate + NADPH + H(+). It functions in the pathway amino-acid biosynthesis; L-lysine biosynthesis via DAP pathway; (S)-tetrahydrodipicolinate from L-aspartate: step 4/4. Catalyzes the conversion of 4-hydroxy-tetrahydrodipicolinate (HTPA) to tetrahydrodipicolinate. In Streptococcus sanguinis (strain SK36), this protein is 4-hydroxy-tetrahydrodipicolinate reductase.